Reading from the N-terminus, the 32-residue chain is MSDIN-like toxin proprotein a (32 aa).

Positions 1–10 (MSDINATRLP) are excised as a propeptide. A cross-link (cyclopeptide (Ile-Pro)) is located at residues 11–18 (IIGILLPP). The propeptide occupies 19 to 32 (CIGDDVTLLLTRGE).

It belongs to the MSDIN fungal toxin family. Post-translationally, processed by the macrocyclase-peptidase enzyme POPB to yield a toxic cyclic octapeptide. POPB first removes 10 residues from the N-terminus. Conformational trapping of the remaining peptide forces the enzyme to release this intermediate rather than proceed to macrocyclization. The enzyme rebinds the remaining peptide in a different conformation and catalyzes macrocyclization of the N-terminal 8 residues.

Functionally, probable toxin that belongs to the MSDIN-like toxin family responsible for a large number of food poisoning cases and deaths. The sequence is that of MSDIN-like toxin proprotein a from Amanita phalloides (Death cap).